The chain runs to 139 residues: NADH dehydrogenase [ubiquinone] 1 alpha subcomplex subunit MCI4 (139 aa).

The protein belongs to the complex I NDUFA5 subunit family.

The protein resides in the mitochondrion inner membrane. Functionally, accessory subunit of the mitochondrial membrane respiratory chain NADH dehydrogenase (Complex I), that is believed not to be involved in catalysis. Complex I functions in the transfer of electrons from NADH to the respiratory chain. The immediate electron acceptor for the enzyme is believed to be ubiquinone. Involved in osmotic and oxidative resistance, yeast to hypha transition and the ability to damage and invade oral epithelial cells. This is NADH dehydrogenase [ubiquinone] 1 alpha subcomplex subunit MCI4 from Candida albicans (strain SC5314 / ATCC MYA-2876) (Yeast).